Consider the following 74-residue polypeptide: uncharacterized protein (74 aa).

A helical membrane pass occupies residues 8 to 30 (LAAAVSSSAASAGVSRIAASAMA).

It localises to the mitochondrion outer membrane. This is an uncharacterized protein from Saccharomyces cerevisiae (strain ATCC 204508 / S288c) (Baker's yeast).